The following is a 771-amino-acid chain: Probable aconitate hydratase, mitochondrial (771 aa).

Substrate contacts are provided by residues Gln86 and 179-181 (DSH). Positions 372, 435, and 438 each coordinate [4Fe-4S] cluster. Substrate is bound by residues Arg461, Arg466, Arg594, and 657–658 (SR).

Belongs to the aconitase/IPM isomerase family. In terms of assembly, monomer. The cofactor is [4Fe-4S] cluster.

The protein localises to the mitochondrion. It catalyses the reaction citrate = D-threo-isocitrate. Its pathway is carbohydrate metabolism; tricarboxylic acid cycle; isocitrate from oxaloacetate: step 2/2. Catalyzes the isomerization of citrate to isocitrate via cis-aconitate. This Dictyostelium discoideum (Social amoeba) protein is Probable aconitate hydratase, mitochondrial (aco2).